A 657-amino-acid chain; its full sequence is Filensin (657 aa).

A head region spans residues 1–38 (MYRSSFLREVRKEKYERSDAYDELRGSPEFDSLAQAQG). The IF rod domain maps to 38 to 318 (GLENLQELNE…RIIENEDSRL (281 aa)). The coil 1A stretch occupies residues 39–73 (LENLQELNERFASYINRARVLEQRNTILRKQLETF). The linker 1 stretch occupies residues 74–82 (QRMDELVGL). The coil 1B stretch occupies residues 83 to 182 (DEAFAGQIEF…RYKKNLMEIQ (100 aa)). Positions 183 to 199 (TYVNILQQIIQTTPRVS) are linker 12. Positions 200 to 318 (PITTGISEEK…RIIENEDSRL (119 aa)) are coil 2. The interval 319–657 (NSAIAGTPVT…SKKKPGDKGS (339 aa)) is tail. Disordered regions lie at residues 503 to 530 (IGGD…ICER) and 565 to 593 (PDVS…TDHD). Residues 519–530 (PSEKEKRDICER) show a composition bias toward basic and acidic residues.

It belongs to the intermediate filament family. In terms of tissue distribution, detected in eye lens fiber cells (at protein level). Detected in embryonic eye lens.

It localises to the cell membrane. The protein localises to the cytoplasm. Its subcellular location is the cytoskeleton. The protein resides in the cell cortex. In terms of biological role, required for the correct formation of lens intermediate filaments. The protein is Filensin (BFSP1) of Gallus gallus (Chicken).